A 537-amino-acid polypeptide reads, in one-letter code: Beta-hexosaminidase subunit beta (537 aa).

Residues 1–23 (MPGSPRRAPGLLLQALVAMVSLA) form the signal peptide. An N-linked (GlcNAc...) asparagine glycan is attached at Asn-62. Cys-69 and Cys-115 are joined by a disulfide. N-linked (GlcNAc...) asparagine glycans are attached at residues Asn-168 and Asn-305. 2 cysteine pairs are disulfide-bonded: Cys-287–Cys-338 and Cys-512–Cys-529. Glu-333 acts as the Proton donor in catalysis.

Belongs to the glycosyl hydrolase 20 family. There are 3 forms of beta-hexosaminidase: hexosaminidase A is a heterodimer composed of one subunit alpha and one subunit beta (chain A and B); hexosaminidase B is a homodimer of two beta subunits (two chains A and B); hexosaminidase S is a homodimer of two alpha subunits. The composition of the dimer (isozyme A versus isozyme S) has a significant effect on the substrate specificity of the alpha subunit active site.

Its subcellular location is the lysosome. It localises to the cytoplasmic vesicle. The protein resides in the secretory vesicle. It is found in the cortical granule. It catalyses the reaction Hydrolysis of terminal non-reducing N-acetyl-D-hexosamine residues in N-acetyl-beta-D-hexosaminides.. The enzyme catalyses N-acetyl-beta-D-galactosaminyl-(1-&gt;4)-beta-D-3-sulfogalactosyl-(1-&gt;4)-beta-D-glucosyl-(1&lt;-&gt;1')-ceramide + H2O = a beta-D-3-sulfogalactosyl-(1-&gt;4)-beta-D-glucosyl-(1&lt;-&gt;1')-ceramide + N-acetyl-beta-D-galactosamine. It carries out the reaction a ganglioside GM2 (d18:1(4E)) + H2O = a ganglioside GM3 (d18:1(4E)) + N-acetyl-beta-D-galactosamine. The catalysed reaction is a ganglioside GM2 + H2O = a ganglioside GM3 + N-acetyl-beta-D-galactosamine. It catalyses the reaction beta-D-GalNAc-(1-&gt;4)-alpha-L-IdoA-(1-&gt;3)-beta-D-GalNAc-4-sulfate-(1-&gt;4)-alpha-L-IdoA-(1-&gt;3)-D-GalNAc-4-sulfate + H2O = alpha-L-IdoA-(1-&gt;3)-beta-D-GalNAc-4-sulfate-(1-&gt;4)-alpha-L-IdoA-(1-&gt;3)-D-GalNAc-4-sulfate + N-acetyl-D-galactosamine. The enzyme catalyses N-acetyl-beta-D-6-sulfogalactosaminyl-(1-&gt;4)-alpha-L-iduronyl-(1-&gt;3)-N-acetyl-D-6-sulfogalactosamine + H2O = alpha-L-iduronyl-(1-&gt;3)-N-acetyl-D-6-sulfogalactosamine + N-acetyl-D-6-sulfogalactosamine. With respect to regulation, addition of GM2A stimulates the hydrolysis of sulfated glycosphingolipid SM2 and the ganglioside GM2. Functionally, hydrolyzes the non-reducing end N-acetyl-D-hexosamine and/or sulfated N-acetyl-D-hexosamine of glycoconjugates, such as the oligosaccharide moieties from proteins and neutral glycolipids, or from certain mucopolysaccharides. The isozyme B does not hydrolyze each of these substrates, however hydrolyzes efficiently neutral oligosaccharide. Only the isozyme A is responsible for the degradation of GM2 gangliosides in the presence of GM2A. During fertilization is responsible, at least in part, for the zona block to polyspermy. Present in the cortical granules of non-activated oocytes, is exocytosed during the cortical reaction in response to oocyte activation and inactivates the sperm galactosyltransferase-binding site, accounting for the block in sperm binding to the zona pellucida. The sequence is that of Beta-hexosaminidase subunit beta from Rattus norvegicus (Rat).